Reading from the N-terminus, the 291-residue chain is ATP synthase gamma chain (291 aa).

This sequence belongs to the ATPase gamma chain family. As to quaternary structure, F-type ATPases have 2 components, CF(1) - the catalytic core - and CF(0) - the membrane proton channel. CF(1) has five subunits: alpha(3), beta(3), gamma(1), delta(1), epsilon(1). CF(0) has three main subunits: a, b and c.

It localises to the cell inner membrane. Produces ATP from ADP in the presence of a proton gradient across the membrane. The gamma chain is believed to be important in regulating ATPase activity and the flow of protons through the CF(0) complex. This is ATP synthase gamma chain from Rhodopseudomonas palustris (strain ATCC BAA-98 / CGA009).